Consider the following 83-residue polypeptide: Mu-theraphotoxin-Hhn2g (83 aa).

An N-terminal signal peptide occupies residues 1-21 (MKASMYLALAGLVLLFVVGYA). Residues 22-48 (SESEEKEFPRELLSKIFAVDDFKGEER) constitute a propeptide that is removed on maturation. 2 cysteine pairs are disulfide-bonded: cysteine 50–cysteine 65 and cysteine 57–cysteine 70. Leucine 81 is subject to Leucine amide.

This sequence belongs to the neurotoxin 10 (Hwtx-1) family. 15 (Hntx-3) subfamily. As to quaternary structure, monomer. Expressed by the venom gland.

Its subcellular location is the secreted. Functionally, lethal neurotoxin. Selectively blocks tetrodotoxin-sensitive voltage-gated sodium channels (Nav). Does not affect tetrodotoxin-resistant voltage-gated sodium channels or calcium channels. In Cyriopagopus hainanus (Chinese bird spider), this protein is Mu-theraphotoxin-Hhn2g.